The chain runs to 313 residues: Probable GTP 3',8-cyclase (313 aa).

The 221-residue stretch at 4–224 (RFGRSIEDLR…EIRSKHYRPR (221 aa)) folds into the Radical SAM core domain. Arg-13 lines the GTP pocket. [4Fe-4S] cluster-binding residues include Cys-20, Cys-24, and Cys-27. Residue Lys-60 participates in GTP binding. Gly-64 contributes to the S-adenosyl-L-methionine binding site. Thr-90 is a binding site for GTP. Residue Ser-114 participates in S-adenosyl-L-methionine binding. Lys-151 lines the GTP pocket. [4Fe-4S] cluster is bound by residues Cys-244 and Cys-247. GTP is bound at residue 249–251 (RIR). Cys-261 contributes to the [4Fe-4S] cluster binding site.

Belongs to the radical SAM superfamily. MoaA family. [4Fe-4S] cluster is required as a cofactor.

The enzyme catalyses GTP + AH2 + S-adenosyl-L-methionine = (8S)-3',8-cyclo-7,8-dihydroguanosine 5'-triphosphate + 5'-deoxyadenosine + L-methionine + A + H(+). Its pathway is cofactor biosynthesis; molybdopterin biosynthesis. Catalyzes the cyclization of GTP to (8S)-3',8-cyclo-7,8-dihydroguanosine 5'-triphosphate. The polypeptide is Probable GTP 3',8-cyclase (Sulfurisphaera tokodaii (strain DSM 16993 / JCM 10545 / NBRC 100140 / 7) (Sulfolobus tokodaii)).